We begin with the raw amino-acid sequence, 468 residues long: H(+)/Cl(-) exchange transporter ClcA (468 aa).

Residues 1 to 30 (MSTRETFKISLLAKMPKDVINQFLSKDKTP) are Cytoplasmic-facing. A helical membrane pass occupies residues 31 to 67 (FSVLFLSLLVGILAGLVGTYFEQAVHLVSETRTDWLK). Residues 68–74 (SEIGSFL) are Periplasmic-facing. The helical transmembrane segment at 75–98 (PLWLAAFLISAFLAFIGYFLVHRF) threads the bilayer. The short motif at 104-108 (GSGIP) is the Selectivity filter part_1 element. Ser-105 lines the chloride pocket. The helical intramembrane region spans 107–114 (IPEIEGAM). The Cytoplasmic segment spans residues 115–121 (DGMRPVR). The next 2 helical transmembrane spans lie at 122–139 (WWRV…ALGS) and 146–164 (EGPT…SDIF). The short motif at 144-148 (GREGP) is the Selectivity filter part_2 element. Over 165-174 (RVKNEDTRHS) the chain is Cytoplasmic. Intramembrane regions (helical) lie at residues 175–187 (LLAA…LAAA) and 191–199 (PLAGIMFVI). Topologically, residues 200 to 212 (EEMRPQFRYTLIS) are cytoplasmic. A helical transmembrane segment spans residues 213–230 (VRAVIISAVAANIVFRVI). At 231–250 (NGQDAVITMPQYDAPELSTL) the chain is on the periplasmic side. Residues 251 to 279 (GLFLLLGALFGVFGVLFNYLITLAQDLFV) form a helical membrane-spanning segment. The Cytoplasmic portion of the chain corresponds to 280–285 (KFHRND). The helical transmembrane segment at 286–307 (RKRYLLTGSMIGGCFGLLLLYV) threads the bilayer. Topologically, residues 308-327 (PELTGGGISLIPTITNGGYG) are periplasmic. A run of 2 helical transmembrane segments spans residues 328–347 (AGIL…LCFG) and 353–374 (GIFA…LIAK). Residues 353–357 (GIFAP) carry the Selectivity filter part_3 motif. Residues Ile-354 and Phe-355 each contribute to the chloride site. Residues 375-384 (VWFPELNIEP) lie on the Periplasmic side of the membrane. The helical intramembrane region spans 385–399 (GMFAIAGMGALFAAT). The segment at residues 400-402 (VRA) is an intramembrane region (note=Loop between two helices). Residues 403 to 414 (PITGILLVIEMT) constitute an intramembrane region (helical). The note=Loop between two helices intramembrane region spans 415-419 (NNYHL). The helical transmembrane segment at 420–436 (ILPLIITSLGAVIFAQL) threads the bilayer. Topologically, residues 437 to 468 (LGGQPIYSQLLHRTLKNQKLQQQDLPPQSPNS) are cytoplasmic. Residue Tyr-443 participates in chloride binding.

It belongs to the chloride channel (TC 2.A.49) family. ClcA subfamily. As to quaternary structure, homodimer.

The protein localises to the cell inner membrane. The catalysed reaction is 2 chloride(in) + H(+)(out) = 2 chloride(out) + H(+)(in). In terms of biological role, proton-coupled chloride transporter. Functions as antiport system and exchanges two chloride ions for 1 proton. Probably acts as an electrical shunt for an outwardly-directed proton pump that is linked to amino acid decarboxylation, as part of the extreme acid resistance (XAR) response. The chain is H(+)/Cl(-) exchange transporter ClcA from Vibrio cholerae serotype O1 (strain ATCC 39541 / Classical Ogawa 395 / O395).